The chain runs to 195 residues: Transmembrane protein 239 (195 aa).

The next 2 helical transmembrane spans lie at 105–125 (LWGL…HALF) and 145–171 (HLLP…LLLF).

The protein localises to the membrane. In Homo sapiens (Human), this protein is Transmembrane protein 239 (TMEM239).